Consider the following 70-residue polypeptide: UPF0352 protein PSHAa1818 (70 aa).

This sequence belongs to the UPF0352 family.

In Pseudoalteromonas translucida (strain TAC 125), this protein is UPF0352 protein PSHAa1818.